The chain runs to 647 residues: DEAD-box ATP-dependent RNA helicase 18 (647 aa).

The Q motif motif lies at 23 to 51; the sequence is FSELSPALSPEVVKALKGGGFRRCTPVQA. The Helicase ATP-binding domain maps to 54 to 232; it reads IPLLLSHKDV…KAGLRNPVRV (179 aa). 67–74 serves as a coordination point for ATP; the sequence is AATGSGKT. Residues 180 to 183 carry the DEAD box motif; it reads DEAD. Residues 274-430 form the Helicase C-terminal domain; sequence QLVDFLVQNN…DIVPQIRSAA (157 aa). Residues 507 to 582 adopt a coiled-coil conformation; that stretch reads KYKDKAREKQ…RLLKKLKRGV (76 aa). A compositionally biased stretch (basic and acidic residues) spans 512 to 545; the sequence is AREKQRQKTLKRKAEELALRPEIEKRRKAPEKPE. Disordered stretches follow at residues 512–565 and 590–647; these read AREK…KEDM and KLTG…TRRR. Positions 596-610 are enriched in acidic residues; the sequence is ESDDDDSSDGGDSDL. The segment covering 619–633 has biased composition (basic residues); that stretch reads KVLKKIKQKGKAKGS.

Belongs to the DEAD box helicase family. DDX55/SPB4 subfamily. In terms of assembly, interacts with BRI1. Post-translationally, phosphorylated.

It carries out the reaction ATP + H2O = ADP + phosphate + H(+). In Oryza sativa subsp. japonica (Rice), this protein is DEAD-box ATP-dependent RNA helicase 18.